The following is an 86-amino-acid chain: Triosephosphate isomerase (86 aa).

The active-site Proton acceptor is Glu-62.

The protein belongs to the triosephosphate isomerase family. As to quaternary structure, homodimer.

It carries out the reaction D-glyceraldehyde 3-phosphate = dihydroxyacetone phosphate. It functions in the pathway carbohydrate biosynthesis; gluconeogenesis. It participates in carbohydrate degradation; glycolysis; D-glyceraldehyde 3-phosphate from glycerone phosphate: step 1/1. The polypeptide is Triosephosphate isomerase (Platanus orientalis (Oriental plane-tree)).